The primary structure comprises 391 residues: DNA repair protein NreA (391 aa).

The segment at 6 to 20 (CAECKGKLLCGRSKC) adopts a C4-type zinc-finger fold. The short motif at 382 to 389 (QTSLASFF) is the PIP motif element.

This sequence belongs to the Nre family. In terms of assembly, interacts with the DNA polymerase sliding clamp (PCNA) via the PIP (PCNA-interacting peptide) motif.

Functionally, involved in DNA damage repair. This Archaeoglobus fulgidus (strain ATCC 49558 / DSM 4304 / JCM 9628 / NBRC 100126 / VC-16) protein is DNA repair protein NreA.